A 143-amino-acid chain; its full sequence is Large ribosomal subunit protein uL13 (143 aa).

Belongs to the universal ribosomal protein uL13 family. In terms of assembly, part of the 50S ribosomal subunit.

This protein is one of the early assembly proteins of the 50S ribosomal subunit, although it is not seen to bind rRNA by itself. It is important during the early stages of 50S assembly. This is Large ribosomal subunit protein uL13 from Neisseria meningitidis serogroup C (strain 053442).